Consider the following 729-residue polypeptide: Sodium-dependent neutral amino acid transporter B(0)AT2 (729 aa).

Residues 1–69 (MPKNSKVVKR…ERPAWNSKLQ (69 aa)) are Cytoplasmic-facing. Phosphoserine occurs at positions 25 and 55. Transmembrane regions (helical) follow at residues 70-90 (YILA…FPYL), 98-117 (AYLL…LFFL), and 142-162 (GIGF…NVII). Residues 163-225 (GWTLFYFSQS…SSISESGGLN (63 aa)) lie on the Extracellular side of the membrane. A glycan (N-linked (GlcNAc...) asparagine) is linked at N187. 4 helical membrane-spanning segments follow: residues 226–244 (WKMT…LAMI), 253–270 (IMYF…CFLI), 306–323 (VFFA…FSSY), and 335–356 (VLVS…FAVL). The Extracellular portion of the chain corresponds to 357-452 (GFKANIVNEK…FIAFTEAMTH (96 aa)). Residues N383 and N394 are each glycosylated (N-linked (GlcNAc...) asparagine). 5 consecutive transmembrane segments (helical) span residues 453 to 472 (FPAS…NLGL), 496 to 514 (ILTV…MFVQ), 530 to 550 (TLPL…VYGI), 571 to 592 (YMWK…IVNM), and 620 to 642 (VVCF…IRRC). Topologically, residues 643–729 (NLIDDSSGNL…DMPDMPESDL (87 aa)) are cytoplasmic. Phosphoserine occurs at positions 687, 699, and 701.

Belongs to the sodium:neurotransmitter symporter (SNF) (TC 2.A.22) family. SLC6A15 subfamily. As to expression, widely distributed in the central nervous system, including the olfactory bulb, the hypothalamus, the cerebral cortex, the hippocampus, and the cerebellum. In addition, intense expression is found in the motor nuclei including the oculomotor nucleus, abducens nucleus, trigeminal motor nucleus, facial nucleus, hypoglossal nucleus and ventral horn of spinal cord. Intense hybridization signals are also observed in the nuclei containing monoaminergic neurons, such as locus coeruleus, the substantia nigra pars compacta, the ventral tegmental area, the dorsal raphe nucleus and the median raphe nucleus.

The protein localises to the membrane. The catalysed reaction is L-leucine(in) + Na(+)(in) = L-leucine(out) + Na(+)(out). The enzyme catalyses L-isoleucine(in) + Na(+)(in) = L-isoleucine(out) + Na(+)(out). It carries out the reaction L-methionine(in) + Na(+)(in) = L-methionine(out) + Na(+)(out). It catalyses the reaction L-proline(in) + Na(+)(in) = L-proline(out) + Na(+)(out). The catalysed reaction is L-alanine(in) + Na(+)(in) = L-alanine(out) + Na(+)(out). The enzyme catalyses L-asparagine(in) + Na(+)(in) = L-asparagine(out) + Na(+)(out). It carries out the reaction L-valine(in) + Na(+)(in) = L-valine(out) + Na(+)(out). It catalyses the reaction L-cysteine(in) + Na(+)(in) = L-cysteine(out) + Na(+)(out). The catalysed reaction is L-glutamine(in) + Na(+)(in) = L-glutamine(out) + Na(+)(out). The enzyme catalyses L-serine(in) + Na(+)(in) = L-serine(out) + Na(+)(out). It carries out the reaction L-threonine(in) + Na(+)(in) = L-threonine(out) + Na(+)(out). It catalyses the reaction L-pipecolate(in) + Na(+)(in) = L-pipecolate(out) + Na(+)(out). The catalysed reaction is L-phenylalanine(in) + Na(+)(in) = L-phenylalanine(out) + Na(+)(out). Functionally, functions as a sodium-dependent neutral amino acid transporter. Exhibits preference for the branched-chain amino acids, particularly leucine, valine and isoleucine and methionine. Can also transport low-affinity substrates such as alanine, phenylalanine, glutamine and pipecolic acid. Mediates the saturable, pH-sensitive and electrogenic cotransport of proline and sodium ions with a stoichiometry of 1:1. May have a role as transporter for neurotransmitter precursors into neurons. In contrast to other members of the neurotransmitter transporter family, does not appear to be chloride-dependent. The chain is Sodium-dependent neutral amino acid transporter B(0)AT2 (Slc6a15) from Rattus norvegicus (Rat).